A 443-amino-acid chain; its full sequence is Phosphoglucosamine mutase (443 aa).

The active-site Phosphoserine intermediate is S101. 4 residues coordinate Mg(2+): S101, D239, D241, and D243. At S101 the chain carries Phosphoserine.

Belongs to the phosphohexose mutase family. Mg(2+) is required as a cofactor. In terms of processing, activated by phosphorylation.

The enzyme catalyses alpha-D-glucosamine 1-phosphate = D-glucosamine 6-phosphate. In terms of biological role, catalyzes the conversion of glucosamine-6-phosphate to glucosamine-1-phosphate. This is Phosphoglucosamine mutase from Francisella philomiragia subsp. philomiragia (strain ATCC 25017 / CCUG 19701 / FSC 153 / O#319-036).